The primary structure comprises 491 residues: Xaa-Pro aminopeptidase 1 (491 aa).

The segment at 1-32 (MAEELTPENPAIPETPEETEEPIKQRKNGLYP) is disordered. D308, D320, H403, E434, and E458 together coordinate Mn(2+).

It belongs to the peptidase M24B family. Homodimer. Mn(2+) is required as a cofactor.

The enzyme catalyses Release of any N-terminal amino acid, including proline, that is linked to proline, even from a dipeptide or tripeptide.. This is Xaa-Pro aminopeptidase 1 (pepPI) from Streptomyces coelicolor (strain ATCC BAA-471 / A3(2) / M145).